A 426-amino-acid chain; its full sequence is Probable imidazolonepropionase (426 aa).

Residues Tyr-158 and His-192 each contribute to the 4-imidazolone-5-propanoate site. Tyr-158 lines the N-formimidoyl-L-glutamate pocket. His-260 lines the Fe(3+) pocket. His-260 serves as a coordination point for Zn(2+). Glu-263 contacts 4-imidazolone-5-propanoate. Fe(3+) is bound at residue Asp-334. A Zn(2+)-binding site is contributed by Asp-334. Asn-336 contacts N-formimidoyl-L-glutamate.

Belongs to the metallo-dependent hydrolases superfamily. HutI family. Zn(2+) serves as cofactor. Fe(3+) is required as a cofactor.

The enzyme catalyses 4-imidazolone-5-propanoate + H2O = N-formimidoyl-L-glutamate. Its pathway is amino-acid degradation; L-histidine degradation into L-glutamate; N-formimidoyl-L-glutamate from L-histidine: step 3/3. The chain is Probable imidazolonepropionase (amdhd1) from Dictyostelium discoideum (Social amoeba).